The chain runs to 439 residues: Branched-chain amino acid permease BrnQ (439 aa).

Topologically, residues Met-1–Asp-9 are cytoplasmic. The helical transmembrane segment at Ile-10–Pro-30 threads the bilayer. The Periplasmic portion of the chain corresponds to Pro-31–Thr-43. The chain crosses the membrane as a helical span at residues Ala-44–Ala-64. The Cytoplasmic portion of the chain corresponds to Lys-65 to Lys-79. A helical membrane pass occupies residues Val-80–Pro-100. Topologically, residues Arg-101–Ser-118 are periplasmic. The helical transmembrane segment at Ala-119–Tyr-139 threads the bilayer. The Cytoplasmic portion of the chain corresponds to Pro-140–Asn-149. The helical transmembrane segment at Phe-150 to Pro-170 threads the bilayer. The Periplasmic segment spans residues Ala-171–Gly-189. The chain crosses the membrane as a helical span at residues Phe-190–Val-210. Topologically, residues Asn-211 to Arg-226 are cytoplasmic. The helical transmembrane segment at Tyr-227 to Phe-247 threads the bilayer. The Periplasmic portion of the chain corresponds to Arg-248–Gly-277. The helical transmembrane segment at Ala-278 to Leu-298 threads the bilayer. The Cytoplasmic segment spans residues Thr-299–Thr-316. Residues Leu-317 to Ile-337 traverse the membrane as a helical segment. A topological domain (periplasmic) is located at residue Gln-338. Residues Ile-339–Phe-359 traverse the membrane as a helical segment. At Thr-360–Arg-369 the chain is on the cytoplasmic side. The chain crosses the membrane as a helical span at residues Ile-370 to Ser-390. At Ala-391–Pro-404 the chain is on the periplasmic side. Residues Leu-405–Ile-425 traverse the membrane as a helical segment. Residues Trp-426–His-439 lie on the Cytoplasmic side of the membrane.

It belongs to the branched chain amino acid transporter family.

Its subcellular location is the cell inner membrane. In terms of biological role, liv-II branched chain amino acid transport system, which transports leucine, valine and isoleucine. The sequence is that of Branched-chain amino acid permease BrnQ from Salmonella typhimurium (strain LT2 / SGSC1412 / ATCC 700720).